Consider the following 89-residue polypeptide: Otospiralin (89 aa).

Residues 1–21 (MQACMVPGLALCLLLGPLAGA) form the signal peptide.

This sequence belongs to the otospiralin family. Ear specific.

The protein resides in the secreted. May be essential for the survival of the neurosensory epithelium of the inner ear. The protein is Otospiralin (OTOS) of Homo sapiens (Human).